The primary structure comprises 449 residues: Ribosomal protein uS12 methylthiotransferase RimO (449 aa).

The 117-residue stretch at 7-123 folds into the MTTase N-terminal domain; the sequence is QKVSMVSLGC…VAEILAEHHA (117 aa). 6 residues coordinate [4Fe-4S] cluster: cysteine 16, cysteine 52, cysteine 86, cysteine 161, cysteine 165, and cysteine 168. The Radical SAM core domain maps to 147-377; it reads SSPGWYAYLK…MKTQARVSFR (231 aa). Residues 380 to 448 form the TRAM domain; that stretch reads RAMVGQTEQV…DYDLVAEMIE (69 aa).

This sequence belongs to the methylthiotransferase family. RimO subfamily. It depends on [4Fe-4S] cluster as a cofactor.

It localises to the cytoplasm. The enzyme catalyses L-aspartate(89)-[ribosomal protein uS12]-hydrogen + (sulfur carrier)-SH + AH2 + 2 S-adenosyl-L-methionine = 3-methylsulfanyl-L-aspartate(89)-[ribosomal protein uS12]-hydrogen + (sulfur carrier)-H + 5'-deoxyadenosine + L-methionine + A + S-adenosyl-L-homocysteine + 2 H(+). In terms of biological role, catalyzes the methylthiolation of an aspartic acid residue of ribosomal protein uS12. This is Ribosomal protein uS12 methylthiotransferase RimO from Trichlorobacter lovleyi (strain ATCC BAA-1151 / DSM 17278 / SZ) (Geobacter lovleyi).